The chain runs to 161 residues: Ribonuclease P protein component 2 (161 aa).

This sequence belongs to the eukaryotic/archaeal RNase P protein component 2 family. Consists of a catalytic RNA component and at least 4-5 protein subunits.

Its subcellular location is the cytoplasm. It catalyses the reaction Endonucleolytic cleavage of RNA, removing 5'-extranucleotides from tRNA precursor.. In terms of biological role, part of ribonuclease P, a protein complex that generates mature tRNA molecules by cleaving their 5'-ends. The protein is Ribonuclease P protein component 2 of Methanopyrus kandleri (strain AV19 / DSM 6324 / JCM 9639 / NBRC 100938).